The chain runs to 171 residues: Peptide deformylase (171 aa).

The Fe cation site is built by cysteine 91 and histidine 133. Glutamate 134 is a catalytic residue. Histidine 137 contributes to the Fe cation binding site.

It belongs to the polypeptide deformylase family. Fe(2+) is required as a cofactor.

It catalyses the reaction N-terminal N-formyl-L-methionyl-[peptide] + H2O = N-terminal L-methionyl-[peptide] + formate. Its function is as follows. Removes the formyl group from the N-terminal Met of newly synthesized proteins. Requires at least a dipeptide for an efficient rate of reaction. N-terminal L-methionine is a prerequisite for activity but the enzyme has broad specificity at other positions. This is Peptide deformylase from Haemophilus ducreyi (strain 35000HP / ATCC 700724).